An 861-amino-acid polypeptide reads, in one-letter code: Piwi-like protein 1 (861 aa).

Basic residues predominate over residues 1–13 (MTGRARARARGRA). The segment at 1-64 (MTGRARARAR…TAGGTAKSQG (64 aa)) is disordered. Arg-14 is subject to Omega-N-methylarginine; by PRMT5; alternate. Residue Arg-14 is modified to Symmetric dimethylarginine; by PRMT5; alternate. A compositionally biased stretch (polar residues) spans 17–27 (ETAQLVGSTAS). Arg-49 carries the post-translational modification Omega-N-methylarginine; by PRMT5. Arg-53 is modified (omega-N-methylarginine; alternate). Arg-53 carries the symmetric dimethylarginine; alternate modification. The D-box motif lies at 217-224 (RRLLKIMN). Residues 278–391 (TVLDFMFNFY…LIPELCYLTG (114 aa)) form the PAZ domain. The required for binding 2'-O-methylated 3'-end of piRNAs stretch occupies residues 316 to 318 (TYR). An Omega-N-methylarginine; by PRMT5 modification is found at Arg-370. The tract at residues 479–615 (SKETRGAPLI…LQMNCKMGGE (137 aa)) is MID region. In terms of domain architecture, Piwi spans 555–847 (IVVCLLSSNR…LAFLVGQSIH (293 aa)). Catalysis depends on residues Asp-632, Glu-670, Asp-702, and His-836.

Belongs to the argonaute family. Piwi subfamily. As to quaternary structure, interacts (via Piwi domain) with DICER1, suggesting that it forms ribonucleoprotein RISC complexes; this interaction is regulated by HSP90AB1 activity. Interacts with MAEL, KIF17, PABPC1, PRMT5 and WDR77. Interacts (when methylated on arginine residues) with TDRD1, TDRKH/TDRD2, RNF17/TDRD4, TDRD6, TDRD7 and TDRD9. Interacts with CLOCK. Interacts with MOV10L1. Interacts with ANAPC10; interaction oly takes place following piRNA-binding. Interacts with RNF8; leading to sequester RNF8 in the cytoplasm. Interacts with TEX19. The cofactor is Mg(2+). Post-translationally, arginine methylation by PRMT5 is required for the interaction with Tudor domain-containing protein (TDRD1, TDRKH/TDRD2, RNF17/TDRD4, TDRD6, TDRD7 and TDRD9) and subsequent localization to the meiotic nuage, also named P granule. In terms of processing, ubiquitinated by the anaphase promoting complex/cyclosome (APC/C) in late spermatids, leading to its degradation. Ubiquitination only takes place following piRNA-binding in adult testis. Ubiquitination and degradation in late spermatogenesis by APC/C is probably required to release RNF8 from the cytoplasm and promote histone to protamine exchange by RNF8. Expressed in spermatocytes and spermatids. Also detected in prostate cancer (at protein level). Detected in most fetal and adult tissues. Expressed in testes, specifically in germline cells; detected in spermatocytes and spermatids during spermatogenesis. Increased expression in testicular tumors originating from embryonic germ cells with retention of germ cells phenotype. No expression in testicular tumors of somatic origin, such as Sertoli cell and Leydig cell tumors. Overexpressed in gastric cancer cells. Isoform 3: Ubiquitously expressed, and specifically in CD34(+) hematopoietic progenitor cells but not in more differentiated cells.

It localises to the cytoplasm. Endoribonuclease that plays a central role in postnatal germ cells by repressing transposable elements and preventing their mobilization, which is essential for the germline integrity. Acts via the piRNA metabolic process, which mediates the repression of transposable elements during meiosis by forming complexes composed of piRNAs and Piwi proteins and governs the methylation and subsequent repression of transposons. Directly binds methylated piRNAs, a class of 24 to 30 nucleotide RNAs that are generated by a Dicer-independent mechanism and are primarily derived from transposons and other repeated sequence elements. Strongly prefers a uridine in the first position of their guide (g1U preference, also named 1U-bias). Not involved in the piRNA amplification loop, also named ping-pong amplification cycle. Acts as an endoribonuclease that cleaves transposon messenger RNAs. Besides their function in transposable elements repression, piRNAs are probably involved in other processes during meiosis such as translation regulation. Probable component of some RISC complex, which mediates RNA cleavage and translational silencing. Also plays a role in the formation of chromatoid bodies and is required for some miRNAs stability. Required to sequester RNF8 in the cytoplasm until late spermatogenesis; RNF8 being released upon ubiquitination and degradation of PIWIL1. Functionally, may be a negative developmental regulator. The polypeptide is Piwi-like protein 1 (PIWIL1) (Homo sapiens (Human)).